Here is a 209-residue protein sequence, read N- to C-terminus: Potassium-transporting ATPase KdpC subunit (209 aa).

A helical transmembrane segment spans residues 11–31 (MILALTVLTGLAYPLAVTAVA). Positions 188–209 (AQAPTPRQPEPGHPEPGRPEVR) are disordered. A compositionally biased stretch (basic and acidic residues) spans 197 to 209 (EPGHPEPGRPEVR).

Belongs to the KdpC family. In terms of assembly, the system is composed of three essential subunits: KdpA, KdpB and KdpC.

It localises to the cell inner membrane. Its function is as follows. Part of the high-affinity ATP-driven potassium transport (or Kdp) system, which catalyzes the hydrolysis of ATP coupled with the electrogenic transport of potassium into the cytoplasm. This subunit acts as a catalytic chaperone that increases the ATP-binding affinity of the ATP-hydrolyzing subunit KdpB by the formation of a transient KdpB/KdpC/ATP ternary complex. This is Potassium-transporting ATPase KdpC subunit from Rhodospirillum centenum (strain ATCC 51521 / SW).